The primary structure comprises 482 residues: ATP synthase subunit beta (482 aa).

167-174 is a binding site for ATP; that stretch reads GGAGVGKT.

It belongs to the ATPase alpha/beta chains family. F-type ATPases have 2 components, CF(1) - the catalytic core - and CF(0) - the membrane proton channel. CF(1) has five subunits: alpha(3), beta(3), gamma(1), delta(1), epsilon(1). CF(0) has three main subunits: a(1), b(2) and c(9-12). The alpha and beta chains form an alternating ring which encloses part of the gamma chain. CF(1) is attached to CF(0) by a central stalk formed by the gamma and epsilon chains, while a peripheral stalk is formed by the delta and b chains.

Its subcellular location is the cell membrane. The catalysed reaction is ATP + H2O + 4 H(+)(in) = ADP + phosphate + 5 H(+)(out). Its function is as follows. Produces ATP from ADP in the presence of a proton gradient across the membrane. The catalytic sites are hosted primarily by the beta subunits. This is ATP synthase subunit beta from Corynebacterium aurimucosum (strain ATCC 700975 / DSM 44827 / CIP 107346 / CN-1) (Corynebacterium nigricans).